The sequence spans 602 residues: GTP-binding protein 1 (602 aa).

Ser-2 bears the Phosphoserine mark. One can recognise a tr-type G domain in the interval Phe-91 to Tyr-322. Residues Gly-100–Ser-107 form a G1 region. Gly-100–Ser-107 provides a ligand contact to GTP. Residues Gly-139–Ser-143 are G2. Residues Asp-185–Gly-188 form a G3 region. GTP-binding positions include Asp-185–His-189 and Thr-241–Asp-244. A G4 region spans residues Thr-241–Asp-244. Residues Ser-299–Val-301 are G5. Residues Leu-506–Lys-528 show a composition bias toward polar residues. Residues Leu-506–Cys-602 are disordered. Ser-513 is modified (phosphoserine). Residues Gly-579–Val-589 are compositionally biased toward basic residues.

Belongs to the TRAFAC class translation factor GTPase superfamily. Classic translation factor GTPase family. GTPBP1 subfamily. In terms of assembly, interacts with EXOSC2/RRP4, EXOSC3/RRP40, EXOSC5/RRP46, HNRNPD, HNRNPR and SYNCRIP. Identified in a complex with AANAT mRNA, but does not bind mRNA by itself.

It localises to the cytoplasm. Functionally, promotes degradation of target mRNA species. Plays a role in the regulation of circadian mRNA stability. Binds GTP and has GTPase activity. The protein is GTP-binding protein 1 (GTPBP1) of Pongo abelii (Sumatran orangutan).